A 240-amino-acid chain; its full sequence is UDP-2,3-diacylglucosamine hydrolase (240 aa).

Asp-8, His-10, Asp-41, Asn-79, and His-114 together coordinate Mn(2+). Position 79–80 (79–80) interacts with substrate; the sequence is NR. Substrate is bound by residues Asp-122, Ser-160, Asn-164, Lys-167, and His-195. His-195 and His-197 together coordinate Mn(2+).

It belongs to the LpxH family. The cofactor is Mn(2+).

It localises to the cell inner membrane. The catalysed reaction is UDP-2-N,3-O-bis[(3R)-3-hydroxytetradecanoyl]-alpha-D-glucosamine + H2O = 2-N,3-O-bis[(3R)-3-hydroxytetradecanoyl]-alpha-D-glucosaminyl 1-phosphate + UMP + 2 H(+). It participates in glycolipid biosynthesis; lipid IV(A) biosynthesis; lipid IV(A) from (3R)-3-hydroxytetradecanoyl-[acyl-carrier-protein] and UDP-N-acetyl-alpha-D-glucosamine: step 4/6. Functionally, hydrolyzes the pyrophosphate bond of UDP-2,3-diacylglucosamine to yield 2,3-diacylglucosamine 1-phosphate (lipid X) and UMP by catalyzing the attack of water at the alpha-P atom. Involved in the biosynthesis of lipid A, a phosphorylated glycolipid that anchors the lipopolysaccharide to the outer membrane of the cell. In Photorhabdus laumondii subsp. laumondii (strain DSM 15139 / CIP 105565 / TT01) (Photorhabdus luminescens subsp. laumondii), this protein is UDP-2,3-diacylglucosamine hydrolase.